The following is a 287-amino-acid chain: mRNA-capping enzyme regulatory subunit OPG124 (287 aa).

The protein belongs to the orthopoxvirus mRNA-capping enzyme regulatory subunit family. Interacts with the catalytic subunit OPG113.

It localises to the virion. In terms of biological role, regulatory subunit of the mRNA cap enzyme which stabilizes the catalytic subunit and enhances its methyltransferase activity through an allosteric mechanism. Heterodimeric mRNA capping enzyme catalyzes the linkage of a N7-methyl-guanosine moiety to the first transcribed nucleotide (cap 0 structure), whereas the methyltransferase OPG102 is responsible for a second methylation at the 2'-O position of the ribose (cap 1 structure). Also involved in early viral gene transcription termination and intermediate viral gene transcription initiation. Early gene transcription termination requires the termination factor VTF, the DNA-dependent ATPase NPH-I/OPG123 and the RAP94/OPG109 subunit of the viral RNA polymerase, as well as the presence of a specific termination motif. Binds, together with RAP94/OPG109, to the termination motif 5'-UUUUUNU-3' in the nascent early mRNA. The sequence is that of mRNA-capping enzyme regulatory subunit OPG124 (OPG124) from Variola virus (isolate Human/India/Ind3/1967) (VARV).